We begin with the raw amino-acid sequence, 353 residues long: Small ribosomal subunit biogenesis GTPase RsgA (353 aa).

The disordered stretch occupies residues 1–24 (MSKNKLSKGQQRRVKANHQRRLKT). A compositionally biased stretch (basic residues) spans 10 to 23 (QQRRVKANHQRRLK). A CP-type G domain is found at 104–274 (ASVLTRPDFY…VIDSPGVREF (171 aa)). Residues 160–163 (NKID) and 214–222 (GQSGVGKSS) contribute to the GTP site. Zn(2+) is bound by residues Cys298, Cys303, His305, and Cys311.

The protein belongs to the TRAFAC class YlqF/YawG GTPase family. RsgA subfamily. In terms of assembly, monomer. Associates with 30S ribosomal subunit, binds 16S rRNA. Zn(2+) is required as a cofactor.

The protein localises to the cytoplasm. Functionally, one of several proteins that assist in the late maturation steps of the functional core of the 30S ribosomal subunit. Helps release RbfA from mature subunits. May play a role in the assembly of ribosomal proteins into the subunit. Circularly permuted GTPase that catalyzes slow GTP hydrolysis, GTPase activity is stimulated by the 30S ribosomal subunit. The sequence is that of Small ribosomal subunit biogenesis GTPase RsgA from Klebsiella pneumoniae subsp. pneumoniae (strain ATCC 700721 / MGH 78578).